Consider the following 222-residue polypeptide: Large ribosomal subunit protein uL4 (222 aa).

The interval 67–87 is disordered; that stretch reads QKGTGNARAGSKRTNVRRGGG.

This sequence belongs to the universal ribosomal protein uL4 family. Part of the 50S ribosomal subunit.

One of the primary rRNA binding proteins, this protein initially binds near the 5'-end of the 23S rRNA. It is important during the early stages of 50S assembly. It makes multiple contacts with different domains of the 23S rRNA in the assembled 50S subunit and ribosome. Functionally, forms part of the polypeptide exit tunnel. In Rhodopirellula baltica (strain DSM 10527 / NCIMB 13988 / SH1), this protein is Large ribosomal subunit protein uL4.